The chain runs to 179 residues: Phospholipase A2 (179 aa).

The N-terminal stretch at M1 to A21 is a signal peptide. A propeptide spanning residues W22–R39 is cleaved from the precursor. Residues W47, G49, and G51 each contribute to the Ca(2+) site. 5 cysteine pairs are disulfide-bonded: C48–C70, C69–C109, C76–C102, C100–C133, and C142–C150. Residue H73 is part of the active site. D74 is a Ca(2+) binding site. Residue D103 is part of the active site. N-linked (GlcNAc...) asparagine glycosylation occurs at N112.

Ca(2+) serves as cofactor. In terms of tissue distribution, expressed by the venom gland.

It localises to the secreted. The catalysed reaction is a 1,2-diacyl-sn-glycero-3-phosphocholine + H2O = a 1-acyl-sn-glycero-3-phosphocholine + a fatty acid + H(+). PLA2 catalyzes the calcium-dependent hydrolysis of the 2-acyl groups in 3-sn-phosphoglycerides. This Xylocopa appendiculata circumvolans (Japanese carpenter bee) protein is Phospholipase A2.